The following is a 72-amino-acid chain: Heat-stable enterotoxin C (72 aa).

The N-terminal stretch at 1-19 is a signal peptide; sequence MKKIVFVLTLMLFSFGTLG. Cystine bridges form between cysteine 60–cysteine 65, cysteine 61–cysteine 69, and cysteine 64–cysteine 72.

The protein belongs to the heat-stable enterotoxin family.

It is found in the secreted. Its function is as follows. Toxin which activates the particulate form of guanylate cyclase and increases cyclic GMP levels within the host intestinal epithelial cells. Highly toxic. This is Heat-stable enterotoxin C (ystC) from Yersinia enterocolitica.